Consider the following 184-residue polypeptide: Protein GrpE (184 aa).

The interval 1–24 is disordered; sequence MADEQLDEKNLNSEEAGAVNGDAR.

This sequence belongs to the GrpE family. Homodimer.

The protein resides in the cytoplasm. Functionally, participates actively in the response to hyperosmotic and heat shock by preventing the aggregation of stress-denatured proteins, in association with DnaK and GrpE. It is the nucleotide exchange factor for DnaK and may function as a thermosensor. Unfolded proteins bind initially to DnaJ; upon interaction with the DnaJ-bound protein, DnaK hydrolyzes its bound ATP, resulting in the formation of a stable complex. GrpE releases ADP from DnaK; ATP binding to DnaK triggers the release of the substrate protein, thus completing the reaction cycle. Several rounds of ATP-dependent interactions between DnaJ, DnaK and GrpE are required for fully efficient folding. The chain is Protein GrpE from Pseudomonas entomophila (strain L48).